A 44-amino-acid chain; its full sequence is Large ribosomal subunit protein bL34 (44 aa).

The tract at residues 21–44 (RMDTSGGRRILSARRRKGRKTISA) is disordered. Positions 31–44 (LSARRRKGRKTISA) are enriched in basic residues.

Belongs to the bacterial ribosomal protein bL34 family.

The sequence is that of Large ribosomal subunit protein bL34 from Endomicrobium trichonymphae.